Reading from the N-terminus, the 631-residue chain is Phosphomethylpyrimidine synthase (631 aa).

Residues Asn239, Met268, Tyr297, His333, 353 to 355 (SRG), 394 to 397 (DGLR), and Glu433 each bind substrate. Residue His437 coordinates Zn(2+). Tyr460 contacts substrate. His501 serves as a coordination point for Zn(2+). Positions 581, 584, and 589 each coordinate [4Fe-4S] cluster.

The protein belongs to the ThiC family. Homodimer. [4Fe-4S] cluster serves as cofactor.

It catalyses the reaction 5-amino-1-(5-phospho-beta-D-ribosyl)imidazole + S-adenosyl-L-methionine = 4-amino-2-methyl-5-(phosphooxymethyl)pyrimidine + CO + 5'-deoxyadenosine + formate + L-methionine + 3 H(+). It functions in the pathway cofactor biosynthesis; thiamine diphosphate biosynthesis. Its function is as follows. Catalyzes the synthesis of the hydroxymethylpyrimidine phosphate (HMP-P) moiety of thiamine from aminoimidazole ribotide (AIR) in a radical S-adenosyl-L-methionine (SAM)-dependent reaction. The sequence is that of Phosphomethylpyrimidine synthase from Escherichia coli O8 (strain IAI1).